The sequence spans 288 residues: MEPALGSERRSPPGPGVPRPPPRGHAPSTAAPAPSPAPMSSSVQSDEERQPRISESGQFSDGLEDRGLLESSTRLKPHEAQNYRKKALWVSWLSIIVTLALAVAAFTVSVMRYSASAFGFAFDAILDVLSSAIVLWRYSNAAAVHSANREYIACVILGVIFLLSSICIVVKAIHDLSTRLLPEVDDFLFSVSILSGILCSVLAVLKFMLGKVLTSRALITDGFNSLVGGVMGFSILLSAEVFKHNAAVWYLDGSIGVLIGLTIFAYGVKLLIDMVPRVRQTRHYEMFE.

The segment at 1 to 64 (MEPALGSERR…ESGQFSDGLE (64 aa)) is disordered. Over 1–87 (MEPALGSERR…HEAQNYRKKA (87 aa)) the chain is Cytoplasmic. Ser-11 carries the post-translational modification Phosphoserine. Positions 12–24 (PPGPGVPRPPPRG) are enriched in pro residues. Low complexity predominate over residues 25 to 42 (HAPSTAAPAPSPAPMSSS). The tract at residues 41-71 (SSVQSDEERQPRISESGQFSDGLEDRGLLES) is required for interaction with MCOLN1. Phosphoserine is present on residues Ser-45, Ser-54, Ser-56, and Ser-60. Residues 88 to 108 (LWVSWLSIIVTLALAVAAFTV) traverse the membrane as a helical segment. Residues 109–115 (SVMRYSA) are Extracellular-facing. The helical transmembrane segment at 116–136 (SAFGFAFDAILDVLSSAIVLW) threads the bilayer. At 137–149 (RYSNAAAVHSANR) the chain is on the cytoplasmic side. A helical transmembrane segment spans residues 150–170 (EYIACVILGVIFLLSSICIVV). At 171–186 (KAIHDLSTRLLPEVDD) the chain is on the extracellular side. Residues 187-207 (FLFSVSILSGILCSVLAVLKF) form a helical membrane-spanning segment. Residues 208–216 (MLGKVLTSR) lie on the Cytoplasmic side of the membrane. A helical transmembrane segment spans residues 217-237 (ALITDGFNSLVGGVMGFSILL). The Extracellular segment spans residues 238-254 (SAEVFKHNAAVWYLDGS). The helical transmembrane segment at 255–275 (IGVLIGLTIFAYGVKLLIDMV) threads the bilayer. Residues 276–288 (PRVRQTRHYEMFE) lie on the Cytoplasmic side of the membrane.

This sequence belongs to the TMEM163 family. In terms of assembly, homodimer. Interacts with MCOLN1. Interacts with SLC30A1, SLC30A2, SLC30A3 and SLC30A4. In terms of tissue distribution, widely expressed, with high expression in the brain, cerebellum, heart, lung and spleen. In the brain, mainly expressed in the glutaminergic neuron subpopulations.

It localises to the cytoplasmic vesicle. Its subcellular location is the secretory vesicle. It is found in the synaptic vesicle membrane. The protein resides in the early endosome membrane. The protein localises to the late endosome membrane. It localises to the lysosome membrane. Its subcellular location is the cell membrane. It catalyses the reaction Zn(2+)(in) = Zn(2+)(out). Its function is as follows. Zinc ion transporter that mediates zinc efflux and plays a crucial role in intracellular zinc homeostasis. Binds the divalent cations Zn(2+), Ni(2+), and to a minor extent Cu(2+). Is a functional modulator of P2X purinoceptors, including P2RX1, P2RX3, P2RX4 and P2RX7. Plays a role in central nervous system development and is required for myelination, and survival and proliferation of oligodendrocytes. The protein is Transmembrane protein 163 (Tmem163) of Mus musculus (Mouse).